The following is a 160-amino-acid chain: Nucleotide-binding protein Tgr7_1196 (160 aa).

It belongs to the YajQ family.

Nucleotide-binding protein. This chain is Nucleotide-binding protein Tgr7_1196, found in Thioalkalivibrio sulfidiphilus (strain HL-EbGR7).